Here is a 436-residue protein sequence, read N- to C-terminus: Ribulose bisphosphate carboxylase large chain (436 aa).

Substrate-binding residues include asparagine 104 and threonine 154. The active-site Proton acceptor is lysine 156. Position 158 (lysine 158) interacts with substrate. Lysine 182, aspartate 184, and glutamate 185 together coordinate Mg(2+). At lysine 182 the chain carries N6-carboxylysine. The active-site Proton acceptor is histidine 275. Positions 276, 308, and 360 each coordinate substrate.

This sequence belongs to the RuBisCO large chain family. Type I subfamily. As to quaternary structure, heterohexadecamer of 8 large chains and 8 small chains. Mg(2+) serves as cofactor.

It localises to the plastid. Its subcellular location is the chloroplast. It catalyses the reaction 2 (2R)-3-phosphoglycerate + 2 H(+) = D-ribulose 1,5-bisphosphate + CO2 + H2O. The enzyme catalyses D-ribulose 1,5-bisphosphate + O2 = 2-phosphoglycolate + (2R)-3-phosphoglycerate + 2 H(+). Its function is as follows. RuBisCO catalyzes two reactions: the carboxylation of D-ribulose 1,5-bisphosphate, the primary event in carbon dioxide fixation, as well as the oxidative fragmentation of the pentose substrate in the photorespiration process. Both reactions occur simultaneously and in competition at the same active site. This Euglena viridis (Cercaria viridis) protein is Ribulose bisphosphate carboxylase large chain.